The primary structure comprises 146 residues: NADH-quinone oxidoreductase subunit A (146 aa).

The next 3 membrane-spanning stretches (helical) occupy residues 14 to 34 (FGLFLIIAVGLCVFMLTGGFL), 68 to 88 (LVAMFFVIFDVEALYLYAWAV), and 96 to 116 (IGFIEATIFILVLLAGLIYLV).

The protein belongs to the complex I subunit 3 family. In terms of assembly, NDH-1 is composed of 13 different subunits. Subunits NuoA, H, J, K, L, M, N constitute the membrane sector of the complex.

The protein localises to the cell inner membrane. The enzyme catalyses a quinone + NADH + 5 H(+)(in) = a quinol + NAD(+) + 4 H(+)(out). Functionally, NDH-1 shuttles electrons from NADH, via FMN and iron-sulfur (Fe-S) centers, to quinones in the respiratory chain. The immediate electron acceptor for the enzyme in this species is believed to be ubiquinone. Couples the redox reaction to proton translocation (for every two electrons transferred, four hydrogen ions are translocated across the cytoplasmic membrane), and thus conserves the redox energy in a proton gradient. The chain is NADH-quinone oxidoreductase subunit A from Pectobacterium carotovorum subsp. carotovorum (Erwinia carotovora subsp. carotovora).